A 108-amino-acid polypeptide reads, in one-letter code: Putative septation protein SpoVG (108 aa).

The tract at residues 84 to 108 is disordered; it reads FEKQSSVETEPVTEENMETAENENE. Over residues 94–108 the composition is skewed to acidic residues; it reads PVTEENMETAENENE.

It belongs to the SpoVG family.

Its function is as follows. Could be involved in septation. This is Putative septation protein SpoVG from Finegoldia magna (strain ATCC 29328 / DSM 20472 / WAL 2508) (Peptostreptococcus magnus).